The primary structure comprises 217 residues: 3,4-dihydroxy-2-butanone 4-phosphate synthase (217 aa).

Residues 37–38 (RE), Asp42, 150–154 (RGGHT), and Glu174 contribute to the D-ribulose 5-phosphate site. Glu38 is a binding site for Mg(2+). His153 is a binding site for Mg(2+).

Belongs to the DHBP synthase family. As to quaternary structure, homodimer. Mg(2+) serves as cofactor. The cofactor is Mn(2+).

It carries out the reaction D-ribulose 5-phosphate = (2S)-2-hydroxy-3-oxobutyl phosphate + formate + H(+). Its pathway is cofactor biosynthesis; riboflavin biosynthesis; 2-hydroxy-3-oxobutyl phosphate from D-ribulose 5-phosphate: step 1/1. Its function is as follows. Catalyzes the conversion of D-ribulose 5-phosphate to formate and 3,4-dihydroxy-2-butanone 4-phosphate. The chain is 3,4-dihydroxy-2-butanone 4-phosphate synthase from Proteus mirabilis (strain HI4320).